Consider the following 510-residue polypeptide: 2,3-bisphosphoglycerate-independent phosphoglycerate mutase (510 aa).

Residues Asp12 and Ser62 each contribute to the Mn(2+) site. Ser62 (phosphoserine intermediate) is an active-site residue. Substrate is bound by residues His123, 153-154 (RD), Arg185, Arg191, 260-263 (RPDR), and Lys335. Asp402, His406, Asp443, His444, and His461 together coordinate Mn(2+).

This sequence belongs to the BPG-independent phosphoglycerate mutase family. In terms of assembly, monomer. It depends on Mn(2+) as a cofactor.

The catalysed reaction is (2R)-2-phosphoglycerate = (2R)-3-phosphoglycerate. Its pathway is carbohydrate degradation; glycolysis; pyruvate from D-glyceraldehyde 3-phosphate: step 3/5. Functionally, catalyzes the interconversion of 2-phosphoglycerate and 3-phosphoglycerate. The chain is 2,3-bisphosphoglycerate-independent phosphoglycerate mutase from Listeria innocua serovar 6a (strain ATCC BAA-680 / CLIP 11262).